Reading from the N-terminus, the 156-residue chain is Cell division protein SepF (156 aa).

Basic and acidic residues predominate over residues 20 to 36 (AQYGYEKEQTDMKKQQD). The interval 20–50 (AQYGYEKEQTDMKKQQDPPEQQDVTFPKAQP) is disordered.

The protein belongs to the SepF family. In terms of assembly, homodimer. Interacts with FtsZ.

The protein localises to the cytoplasm. Its function is as follows. Cell division protein that is part of the divisome complex and is recruited early to the Z-ring. Probably stimulates Z-ring formation, perhaps through the cross-linking of FtsZ protofilaments. Its function overlaps with FtsA. This chain is Cell division protein SepF, found in Bacillus cereus (strain G9842).